Here is a 20-residue protein sequence, read N- to C-terminus: Brevinin-1SPd (20 aa).

Residues C14 and C20 are joined by a disulfide bond.

In terms of tissue distribution, expressed by the skin glands.

The protein localises to the secreted. Functionally, antimicrobial peptide with activity against Gram-negative and Gram-positive bacteria (MIC=13 uM against E.coli, MIC=3 uM against S.aureus) and fungi (MIC=3 uM against C.albicans). Shows hemolytic activity on human erythrocytes (HC(50)=8 uM). This is Brevinin-1SPd from Lithobates septentrionalis (Mink frog).